The sequence spans 94 residues: CRISPR-associated endoribonuclease Cas2 (94 aa).

Asp-11 serves as a coordination point for Mg(2+).

It belongs to the CRISPR-associated endoribonuclease Cas2 protein family. Homodimer, forms a heterotetramer with a Cas1 homodimer. It depends on Mg(2+) as a cofactor.

Its function is as follows. CRISPR (clustered regularly interspaced short palindromic repeat), is an adaptive immune system that provides protection against mobile genetic elements (viruses, transposable elements and conjugative plasmids). CRISPR clusters contain sequences complementary to antecedent mobile elements and target invading nucleic acids. CRISPR clusters are transcribed and processed into CRISPR RNA (crRNA). Functions as a ssRNA-specific endoribonuclease. Involved in the integration of spacer DNA into the CRISPR cassette. In Thermus thermophilus (strain ATCC 27634 / DSM 579 / HB8), this protein is CRISPR-associated endoribonuclease Cas2.